The chain runs to 586 residues: MDVSGVTGLLRGTALLLVLAAALCSAISSINPDRSGDGRCQAIEIPMCKDIGYNMTRMPNLMGHENQKEAAIQLHEFAPLVEYGCHSHLKFFLCSLYAPMCTEQVSTPIPACRVMCEQARLKCSPIMEQFNFKWPDSLDCSKLPNKNDPNYLCMEAPNNGTDETPRGSSMLPPIFRPQRPSSGHEIYPKDPTSRSSCENSGKFHHVEKSASCAPLCSSSVDVYWSKDDKKFAFIWIAIWSILCFFSSAFTVLTFLVDPLRFKYPERPIIFLSMCYCVYSVGYIIRLFAGADSIACDRDSGQLYVIQEGLESTGCTIVFLILYYFGMASSLWWVILTLTWFLAAGKKWGHEAIEANSSYFHLAAWAIPAVKTIMILVMRRVAGDELTGVCYVGSMDVNALTGFVLIPLACYLIIGTSFILSGFVALFHIRRVMKTGGENTDKLEKLMVRIGVFSVLYTVPATCVIACYFYERLNMDFWKILATQDKCKMDSQTKTLDCTMTSSIPAVEIFMVKIFMLLVVGITSGMWIWTSKTVQSWQNVFSKRLKKRNRSKPASVITSAGIYKKPQHPPKVHHGKYESALQSPTCV.

An N-terminal signal peptide occupies residues 1–26 (MDVSGVTGLLRGTALLLVLAAALCSA). Topologically, residues 27–230 (ISSINPDRSG…DVYWSKDDKK (204 aa)) are extracellular. Residues 35–156 (SGDGRCQAIE…NDPNYLCMEA (122 aa)) enclose the FZ domain. Cystine bridges form between C40-C101, C48-C94, C85-C123, C112-C153, and C116-C140. N-linked (GlcNAc...) asparagine glycosylation occurs at N54. A glycan (N-linked (GlcNAc...) asparagine) is linked at N159. The segment at 161 to 199 (TDETPRGSSMLPPIFRPQRPSSGHEIYPKDPTSRSSCEN) is disordered. Residues 231–251 (FAFIWIAIWSILCFFSSAFTV) form a helical membrane-spanning segment. Residues 252–267 (LTFLVDPLRFKYPERP) lie on the Cytoplasmic side of the membrane. A helical transmembrane segment spans residues 268–288 (IIFLSMCYCVYSVGYIIRLFA). Residues 289 to 315 (GADSIACDRDSGQLYVIQEGLESTGCT) lie on the Extracellular side of the membrane. A helical membrane pass occupies residues 316 to 336 (IVFLILYYFGMASSLWWVILT). Residues 337-356 (LTWFLAAGKKWGHEAIEANS) lie on the Cytoplasmic side of the membrane. The helical transmembrane segment at 357–377 (SYFHLAAWAIPAVKTIMILVM) threads the bilayer. The Extracellular segment spans residues 378 to 401 (RRVAGDELTGVCYVGSMDVNALTG). Residues 402 to 422 (FVLIPLACYLIIGTSFILSGF) traverse the membrane as a helical segment. Over 423 to 448 (VALFHIRRVMKTGGENTDKLEKLMVR) the chain is Cytoplasmic. The chain crosses the membrane as a helical span at residues 449–469 (IGVFSVLYTVPATCVIACYFY). At 470–507 (ERLNMDFWKILATQDKCKMDSQTKTLDCTMTSSIPAVE) the chain is on the extracellular side. Residues 508-528 (IFMVKIFMLLVVGITSGMWIW) traverse the membrane as a helical segment. Residues 529-586 (TSKTVQSWQNVFSKRLKKRNRSKPASVITSAGIYKKPQHPPKVHHGKYESALQSPTCV) lie on the Cytoplasmic side of the membrane. Residues 531–536 (KTVQSW) carry the Lys-Thr-X-X-X-Trp motif, mediates interaction with the PDZ domain of Dvl family members motif. Residues 563–586 (KKPQHPPKVHHGKYESALQSPTCV) form a disordered region. Positions 564–573 (KPQHPPKVHH) are enriched in basic residues. Residues 584-586 (TCV) carry the PDZ-binding motif.

Belongs to the G-protein coupled receptor Fz/Smo family. As to expression, expressed in liver, lung, brain, testis, stomach, kidney, eye, skeletal muscle and skin.

It localises to the cell membrane. Receptor for Wnt proteins. Most of frizzled receptors are coupled to the beta-catenin canonical signaling pathway, which leads to the activation of disheveled proteins, inhibition of GSK-3 kinase, nuclear accumulation of beta-catenin and activation of Wnt target genes. A second signaling pathway involving PKC and calcium fluxes has been seen for some family members, but it is not yet clear if it represents a distinct pathway or if it can be integrated in the canonical pathway, as PKC seems to be required for Wnt-mediated inactivation of GSK-3 kinase. Both pathways seem to involve interactions with G-proteins. May be involved in transduction and intercellular transmission of polarity information during tissue morphogenesis and/or in differentiated tissues. Activated by Wnt8. Could have an antagonizing activity in the morphogenesis during development. The polypeptide is Frizzled-10-A (fzd10-a) (Xenopus laevis (African clawed frog)).